The primary structure comprises 244 residues: 1-(5-phosphoribosyl)-5-[(5-phosphoribosylamino)methylideneamino] imidazole-4-carboxamide isomerase (244 aa).

Asp9 acts as the Proton acceptor in catalysis. Asp131 serves as the catalytic Proton donor.

This sequence belongs to the HisA/HisF family.

The protein resides in the cytoplasm. The catalysed reaction is 1-(5-phospho-beta-D-ribosyl)-5-[(5-phospho-beta-D-ribosylamino)methylideneamino]imidazole-4-carboxamide = 5-[(5-phospho-1-deoxy-D-ribulos-1-ylimino)methylamino]-1-(5-phospho-beta-D-ribosyl)imidazole-4-carboxamide. Its pathway is amino-acid biosynthesis; L-histidine biosynthesis; L-histidine from 5-phospho-alpha-D-ribose 1-diphosphate: step 4/9. The protein is 1-(5-phosphoribosyl)-5-[(5-phosphoribosylamino)methylideneamino] imidazole-4-carboxamide isomerase of Campylobacter jejuni subsp. jejuni serotype O:6 (strain 81116 / NCTC 11828).